We begin with the raw amino-acid sequence, 206 residues long: MTDTAASASQPALVRNELNLVWLDMEMTGLDPDNDRIIEIAVVVTNSTLDIAVEGPVFAIHQSDETLAKMDDWNKSTHGRSGLIDRVRASTVTEADAAAQLQAFLAQYVSPGKSPMCGNSICQDRRFMARWMPEFERFFHYRNLDVSTLKELCRRWQPAIYKGFQKRAMHTALADIHESIDELKYYRQHFLIPAASAPAGESAPAA.

Positions 20–183 (LVWLDMEMTG…ADIHESIDEL (164 aa)) constitute an Exonuclease domain. The active site involves Tyr-141.

The protein belongs to the oligoribonuclease family.

The protein resides in the cytoplasm. Functionally, 3'-to-5' exoribonuclease specific for small oligoribonucleotides. In Burkholderia ambifaria (strain ATCC BAA-244 / DSM 16087 / CCUG 44356 / LMG 19182 / AMMD) (Burkholderia cepacia (strain AMMD)), this protein is Oligoribonuclease.